The primary structure comprises 239 residues: tRNA (guanine-N(1)-)-methyltransferase (239 aa).

S-adenosyl-L-methionine is bound by residues Gly-108 and 128–133; that span reads VGNFIV.

It belongs to the RNA methyltransferase TrmD family. As to quaternary structure, homodimer.

Its subcellular location is the cytoplasm. The catalysed reaction is guanosine(37) in tRNA + S-adenosyl-L-methionine = N(1)-methylguanosine(37) in tRNA + S-adenosyl-L-homocysteine + H(+). Functionally, specifically methylates guanosine-37 in various tRNAs. The sequence is that of tRNA (guanine-N(1)-)-methyltransferase from Helicobacter hepaticus (strain ATCC 51449 / 3B1).